A 610-amino-acid polypeptide reads, in one-letter code: Dopamine beta-hydroxylase (610 aa).

Residues 1-9 (MKVPSPSVR) lie on the Cytoplasmic side of the membrane. The chain crosses the membrane as a helical; Signal-anchor for type II membrane protein span at residues 10 to 30 (EAASMYGTAVAIFLVILVAAL). At 31–610 (QGSEPPESPF…TVVDIGGGKG (580 aa)) the chain is on the intragranular side. The DOMON domain maps to 50–166 (GTLELSWNVS…GTVHLVYGIL (117 aa)). N-linked (GlcNAc...) asparagine glycosylation is found at Asn57, Asn177, and Asn194. 6 disulfide bridges follow: Cys147–Cys589, Cys225–Cys276, Cys262–Cys288, Cys383–Cys496, Cys387–Cys558, and Cys459–Cys481. The active site involves Tyr223. Residues His255 and His256 each coordinate Cu(2+). Residues His326, His405, His407, and Met480 each contribute to the Cu(2+) site. His405 is an active-site residue. Positions 586–610 (TPRCPASRGRSPAGPTVVDIGGGKG) are disordered.

Belongs to the copper type II ascorbate-dependent monooxygenase family. As to quaternary structure, homotetramer; composed of two disulfide-linked dimers. Cu(2+) serves as cofactor. Proteolytic cleavage after the membrane-anchor leads to the release of the soluble form. Post-translationally, N-glycosylated. Detected in adrenal medulla chromaffin cells.

It is found in the cytoplasmic vesicle. The protein resides in the secretory vesicle lumen. Its subcellular location is the secretory vesicle. The protein localises to the chromaffin granule lumen. It localises to the secreted. It is found in the secretory vesicle membrane. The protein resides in the chromaffin granule membrane. The enzyme catalyses dopamine + 2 L-ascorbate + O2 = (R)-noradrenaline + 2 monodehydro-L-ascorbate radical + H2O. Its pathway is catecholamine biosynthesis; (R)-noradrenaline biosynthesis; (R)-noradrenaline from dopamine: step 1/1. In terms of biological role, catalyzes the hydroxylation of dopamine to noradrenaline (also known as norepinephrine), and is thus vital for regulation of these neurotransmitters. In Equus caballus (Horse), this protein is Dopamine beta-hydroxylase (DBH).